The sequence spans 374 residues: Dispase autolysis-inducing protein (374 aa).

A signal peptide spans 1–26; the sequence is MKRMGWAVTAAVTTIVLAQSSLAAQA.

It localises to the secreted. Functionally, induces autolysis of dispase and thermolysin. This Streptomyces mobaraensis (Streptoverticillium mobaraense) protein is Dispase autolysis-inducing protein (daip).